A 193-amino-acid chain; its full sequence is Cysteine and glycine-rich protein 2 (193 aa).

Positions 10 to 61 (CGACGRTVYHAEEVQCDGRSFHRCCFLCMVCRKNLDSTTVAIHDEEIYCKSC) constitute an LIM zinc-binding 1 domain. The short motif at 64–69 (KKYGPK) is the Nuclear localization signal element. Lys-91 participates in a covalent cross-link: Glycyl lysine isopeptide (Lys-Gly) (interchain with G-Cter in SUMO2). An N6-acetyllysine mark is found at Lys-112 and Lys-131. Residues 119-170 (CSRCGDSVYAAEKIIGAGKPWHKNCFRCAKCGKSLESTTLTEKEGEIYCKGC) form the LIM zinc-binding 2 domain. At Lys-137 the chain carries N6-acetyllysine; alternate. Position 137 is an N6-succinyllysine; alternate (Lys-137). Position 161 is an N6-acetyllysine (Lys-161).

In terms of assembly, interacts with KAT14. The LIM domain 1 is necessary and sufficient for this interaction. Interacts with GLRX3.

It localises to the nucleus. Functionally, drastically down-regulated in response to PDGF-BB or cell injury, that promote smooth muscle cell proliferation and dedifferentiation. Seems to play a role in the development of the embryonic vascular system. This is Cysteine and glycine-rich protein 2 (Csrp2) from Mus musculus (Mouse).